The following is a 20-amino-acid chain: Fibrinogen beta chain (20 aa).

Acidic residues predominate over residues 1–12 (IIDYYDEGEEDR). The tract at residues 1-20 (IIDYYDEGEEDRDVGVVDAR) is disordered.

Heterohexamer; disulfide linked. Contains 2 sets of 3 non-identical chains (alpha, beta and gamma). The 2 heterotrimers are in head to head conformation with the N-termini in a small central domain. Conversion of fibrinogen to fibrin is triggered by thrombin, which cleaves fibrinopeptides A and B from alpha and beta chains, and thus exposes the N-terminal polymerization sites responsible for the formation of the soft clot.

The protein resides in the secreted. Cleaved by the protease thrombin to yield monomers which, together with fibrinogen alpha (FGA) and fibrinogen gamma (FGG), polymerize to form an insoluble fibrin matrix. Fibrin has a major function in hemostasis as one of the primary components of blood clots. In addition, functions during the early stages of wound repair to stabilize the lesion and guide cell migration during re-epithelialization. Was originally thought to be essential for platelet aggregation, based on in vitro studies using anticoagulated blood. However subsequent studies have shown that it is not absolutely required for thrombus formation in vivo. Enhances expression of SELP in activated platelets. Maternal fibrinogen is essential for successful pregnancy. Fibrin deposition is also associated with infection, where it protects against IFNG-mediated hemorrhage. May also facilitate the antibacterial immune response via both innate and T-cell mediated pathways. This chain is Fibrinogen beta chain (FGB), found in Felis catus (Cat).